Consider the following 217-residue polypeptide: Uracil-DNA glycosylase (217 aa).

D62 acts as the Proton acceptor in catalysis.

Belongs to the uracil-DNA glycosylase (UDG) superfamily. UNG family.

It is found in the cytoplasm. The enzyme catalyses Hydrolyzes single-stranded DNA or mismatched double-stranded DNA and polynucleotides, releasing free uracil.. In terms of biological role, excises uracil residues from the DNA which can arise as a result of misincorporation of dUMP residues by DNA polymerase or due to deamination of cytosine. The sequence is that of Uracil-DNA glycosylase from Streptococcus pneumoniae (strain P1031).